Consider the following 259-residue polypeptide: BTB/POZ domain-containing protein KCTD4 (259 aa).

Residues 1–25 (MERKINRREKEKEYEGKHNSLEDTD) are disordered. In terms of domain architecture, BTB spans 33–134 (TLMTLNVGGY…EVKSRWEKEQ (102 aa)).

The chain is BTB/POZ domain-containing protein KCTD4 (KCTD4) from Homo sapiens (Human).